Here is a 220-residue protein sequence, read N- to C-terminus: Cytidylate kinase (220 aa).

Residue 9–17 (GPAASGKST) coordinates ATP.

Belongs to the cytidylate kinase family. Type 1 subfamily.

The protein localises to the cytoplasm. The enzyme catalyses CMP + ATP = CDP + ADP. It catalyses the reaction dCMP + ATP = dCDP + ADP. This chain is Cytidylate kinase, found in Thermotoga maritima (strain ATCC 43589 / DSM 3109 / JCM 10099 / NBRC 100826 / MSB8).